The chain runs to 68 residues: MPKHEFSVDMTCGGCAEAVSRVLNKLGGVKYDIDLPNKKVCIESEHSMDTLLATLKKTGKTVSYLGLE.

The HMA domain maps to 1–63 (MPKHEFSVDM…TLKKTGKTVS (63 aa)). Cysteine 12 and cysteine 15 together coordinate Cu cation. Position 47 is a phosphoserine (serine 47). Position 60 is an N6-acetyllysine (lysine 60).

This sequence belongs to the ATX1 family. As to quaternary structure, homodimer. Interacts with ATP7B. Interacts with ATP7A. Interacts (via dimer form) with SLC31A1 (via C-terminal domain); this interaction improves ATOX1 stability and controls intracellular Cu(I) levels. In terms of tissue distribution, ubiquitous.

Its function is as follows. Binds and deliver cytosolic copper to the copper ATPase proteins. May be important in cellular antioxidant defense. The protein is Copper transport protein ATOX1 of Homo sapiens (Human).